Here is a 330-residue protein sequence, read N- to C-terminus: Peroxidase 55 (330 aa).

The signal sequence occupies residues 1–30 (MDIRSDDAKKPMMMWFLGMLLFSMVAESNA). Disulfide bonds link Cys-41/Cys-121, Cys-74/Cys-79, Cys-127/Cys-326, and Cys-206/Cys-238. His-72 functions as the Proton acceptor in the catalytic mechanism. Ca(2+)-binding residues include Asp-73, Val-76, Gly-78, Asp-80, and Ser-82. Pro-169 is a substrate binding site. His-199 is a binding site for heme b. Ca(2+) is bound at residue Thr-200. Asn-215 carries N-linked (GlcNAc...) asparagine glycosylation. Ca(2+) contacts are provided by Asp-250, Ser-253, and Asp-258.

It belongs to the peroxidase family. Classical plant (class III) peroxidase subfamily. It depends on heme b as a cofactor. Ca(2+) is required as a cofactor. Slightly expressed in roots.

It is found in the secreted. It catalyses the reaction 2 a phenolic donor + H2O2 = 2 a phenolic radical donor + 2 H2O. Functionally, removal of H(2)O(2), oxidation of toxic reductants, biosynthesis and degradation of lignin, suberization, auxin catabolism, response to environmental stresses such as wounding, pathogen attack and oxidative stress. These functions might be dependent on each isozyme/isoform in each plant tissue. The protein is Peroxidase 55 (PER55) of Arabidopsis thaliana (Mouse-ear cress).